The following is a 665-amino-acid chain: Secreted LysM effector Lys3 (665 aa).

Residues 1–19 form the signal peptide; that stretch reads MLWLTVSLTGFALLGVVAA. Asn-43 and Asn-153 each carry an N-linked (GlcNAc...) asparagine glycan. 3 consecutive LysM domains span residues 166-211, 216-264, and 303-349; these read RTYT…TLCL, TLRK…YICI, and KWYV…AYCV. Asn-234 carries an N-linked (GlcNAc...) asparagine glycan. A glycan (N-linked (GlcNAc...) asparagine) is linked at Asn-398. The LysM 4 domain maps to 409 to 454; that stretch reads SWSDAAKLNSCSFIAHINGVTVSQLLQWNPSLSKDSCSLSRELYYC. The N-linked (GlcNAc...) asparagine glycan is linked to Asn-531. The interval 585–610 is disordered; that stretch reads SSVSMTNSAPATATSTGGPPAPTQDG. Residues 592–602 are compositionally biased toward low complexity; that stretch reads SAPATATSTGG. N-linked (GlcNAc...) asparagine glycosylation occurs at Asn-614. The 47-residue stretch at 617–663 folds into the LysM 5 domain; the sequence is KWHVVESGDGCWAIYTKYGITSDQLFEWNTKISKDCSNIWLGYAVCV.

Belongs to the secreted LysM effector family.

Its function is as follows. Might have a role in sequestration of chitin oligosaccharides (breakdown products of fungal cell walls that are released during invasion and act as triggers of host immunity) to dampen host defense. The polypeptide is Secreted LysM effector Lys3 (Pochonia chlamydosporia (strain 123) (Metacordyceps chlamydosporia)).